The sequence spans 338 residues: NADPH dehydrogenase (338 aa).

Tyr28 provides a ligand contact to substrate. Positions 60 and 102 each coordinate FMN. 164 to 167 is a binding site for substrate; the sequence is HAAH. FMN is bound by residues Arg215 and 307-308; that span reads AR.

Belongs to the NADH:flavin oxidoreductase/NADH oxidase family. NamA subfamily. Homotetramer. FMN is required as a cofactor.

The enzyme catalyses A + NADPH + H(+) = AH2 + NADP(+). Catalyzes the reduction of the double bond of an array of alpha,beta-unsaturated aldehydes and ketones. It also reduces the nitro group of nitroester and nitroaromatic compounds. It could have a role in detoxification processes. This chain is NADPH dehydrogenase, found in Bacillus velezensis (strain DSM 23117 / BGSC 10A6 / LMG 26770 / FZB42) (Bacillus amyloliquefaciens subsp. plantarum).